The following is a 294-amino-acid chain: Elongation factor Ts (294 aa).

Positions 81–84 (TDFV) are involved in Mg(2+) ion dislocation from EF-Tu.

It belongs to the EF-Ts family.

The protein localises to the cytoplasm. Its function is as follows. Associates with the EF-Tu.GDP complex and induces the exchange of GDP to GTP. It remains bound to the aminoacyl-tRNA.EF-Tu.GTP complex up to the GTP hydrolysis stage on the ribosome. The protein is Elongation factor Ts of Hydrogenovibrio crunogenus (strain DSM 25203 / XCL-2) (Thiomicrospira crunogena).